The primary structure comprises 92 residues: Elongation factor 1-beta (92 aa).

Belongs to the EF-1-beta/EF-1-delta family.

Its function is as follows. Promotes the exchange of GDP for GTP in EF-1-alpha/GDP, thus allowing the regeneration of EF-1-alpha/GTP that could then be used to form the ternary complex EF-1-alpha/GTP/AAtRNA. This is Elongation factor 1-beta from Pyrobaculum arsenaticum (strain DSM 13514 / JCM 11321 / PZ6).